The sequence spans 511 residues: Bifunctional purine biosynthesis protein PurH (511 aa).

Residues 1-145 (MKKRALVSVS…KNHKFVSVIV (145 aa)) enclose the MGS-like domain.

This sequence belongs to the PurH family.

The catalysed reaction is (6R)-10-formyltetrahydrofolate + 5-amino-1-(5-phospho-beta-D-ribosyl)imidazole-4-carboxamide = 5-formamido-1-(5-phospho-D-ribosyl)imidazole-4-carboxamide + (6S)-5,6,7,8-tetrahydrofolate. It carries out the reaction IMP + H2O = 5-formamido-1-(5-phospho-D-ribosyl)imidazole-4-carboxamide. The protein operates within purine metabolism; IMP biosynthesis via de novo pathway; 5-formamido-1-(5-phospho-D-ribosyl)imidazole-4-carboxamide from 5-amino-1-(5-phospho-D-ribosyl)imidazole-4-carboxamide (10-formyl THF route): step 1/1. Its pathway is purine metabolism; IMP biosynthesis via de novo pathway; IMP from 5-formamido-1-(5-phospho-D-ribosyl)imidazole-4-carboxamide: step 1/1. The sequence is that of Bifunctional purine biosynthesis protein PurH from Bacillus mycoides (strain KBAB4) (Bacillus weihenstephanensis).